The following is a 341-amino-acid chain: S-adenosylmethionine:tRNA ribosyltransferase-isomerase (341 aa).

This sequence belongs to the QueA family. Monomer.

The protein resides in the cytoplasm. It catalyses the reaction 7-aminomethyl-7-carbaguanosine(34) in tRNA + S-adenosyl-L-methionine = epoxyqueuosine(34) in tRNA + adenine + L-methionine + 2 H(+). The protein operates within tRNA modification; tRNA-queuosine biosynthesis. In terms of biological role, transfers and isomerizes the ribose moiety from AdoMet to the 7-aminomethyl group of 7-deazaguanine (preQ1-tRNA) to give epoxyqueuosine (oQ-tRNA). This chain is S-adenosylmethionine:tRNA ribosyltransferase-isomerase, found in Alkaliphilus metalliredigens (strain QYMF).